Here is a 417-residue protein sequence, read N- to C-terminus: Methylthioribose-1-phosphate isomerase (417 aa).

Aspartate 285 (proton donor) is an active-site residue.

It belongs to the eIF-2B alpha/beta/delta subunits family. MtnA subfamily.

The protein localises to the cytoplasm. It is found in the nucleus. It carries out the reaction 5-(methylsulfanyl)-alpha-D-ribose 1-phosphate = 5-(methylsulfanyl)-D-ribulose 1-phosphate. The protein operates within amino-acid biosynthesis; L-methionine biosynthesis via salvage pathway; L-methionine from S-methyl-5-thio-alpha-D-ribose 1-phosphate: step 1/6. Its function is as follows. Catalyzes the interconversion of methylthioribose-1-phosphate (MTR-1-P) into methylthioribulose-1-phosphate (MTRu-1-P). The polypeptide is Methylthioribose-1-phosphate isomerase (Lachancea thermotolerans (strain ATCC 56472 / CBS 6340 / NRRL Y-8284) (Yeast)).